Reading from the N-terminus, the 309-residue chain is UDP-N-acetylenolpyruvoylglucosamine reductase (309 aa).

Residues 24–187 (RVGGPADWLF…TKAVFEAPRG (164 aa)) form the FAD-binding PCMH-type domain. R167 is a catalytic residue. The segment covering 200–213 (LARRDATQPTKERS) has biased composition (basic and acidic residues). A disordered region spans residues 200 to 230 (LARRDATQPTKERSAGSTFRNPAGFSSTGRS). The segment covering 214–228 (AGSTFRNPAGFSSTG) has biased composition (polar residues). Catalysis depends on S216, which acts as the Proton donor. E298 is a catalytic residue.

The protein belongs to the MurB family. FAD serves as cofactor.

It is found in the cytoplasm. The enzyme catalyses UDP-N-acetyl-alpha-D-muramate + NADP(+) = UDP-N-acetyl-3-O-(1-carboxyvinyl)-alpha-D-glucosamine + NADPH + H(+). The protein operates within cell wall biogenesis; peptidoglycan biosynthesis. Functionally, cell wall formation. The sequence is that of UDP-N-acetylenolpyruvoylglucosamine reductase from Roseobacter denitrificans (strain ATCC 33942 / OCh 114) (Erythrobacter sp. (strain OCh 114)).